Consider the following 230-residue polypeptide: Ion-translocating oxidoreductase complex subunit E (230 aa).

The next 5 helical transmembrane spans lie at 22–42, 63–83, 86–106, 125–145, and 182–202; these read LLGL…LGLG, TPAE…VSAV, LINA…PLIV, WLSA…MFVL, and PFLL…MLAV.

It belongs to the NqrDE/RnfAE family. The complex is composed of six subunits: RsxA, RsxB, RsxC, RsxD, RsxE and RsxG.

Its subcellular location is the cell inner membrane. Part of a membrane-bound complex that couples electron transfer with translocation of ions across the membrane. Required to maintain the reduced state of SoxR. The protein is Ion-translocating oxidoreductase complex subunit E of Salmonella paratyphi A (strain ATCC 9150 / SARB42).